Here is a 162-residue protein sequence, read N- to C-terminus: Transcriptional repressor NrdR (162 aa).

Positions M1–D21 are disordered. The segment at C3 to C34 is a zinc-finger region. Residues L49–E139 enclose the ATP-cone domain.

It belongs to the NrdR family. Requires Zn(2+) as cofactor.

Functionally, negatively regulates transcription of bacterial ribonucleotide reductase nrd genes and operons by binding to NrdR-boxes. This Natronomonas pharaonis (strain ATCC 35678 / DSM 2160 / CIP 103997 / JCM 8858 / NBRC 14720 / NCIMB 2260 / Gabara) (Halobacterium pharaonis) protein is Transcriptional repressor NrdR.